Here is a 251-residue protein sequence, read N- to C-terminus: Leucine-rich repeat and calponin homology domain-containing protein 1 (251 aa).

The segment at 73-97 (SNGSEYSPNEIRANSPAISPTANST) is disordered. A phosphoserine mark is found at serine 87 and serine 91. The span at 88-97 (PAISPTANST) shows a compositional bias: polar residues. Threonine 123 carries the post-translational modification Phosphothreonine. Positions 131-244 (MREEKELVEH…ITVQALLDVT (114 aa)) constitute a Calponin-homology (CH) domain.

Interacts (via LRR repeats) with unphosphorylated DOCK8 (via DHR-2 domain); the interaction prevents the interaction between DOCK8 and CDC42.

The protein localises to the cytoplasm. Functionally, acts as a negative regulator of GTPase CDC42 by sequestering CDC42-guanine exchange factor DOCK8. Probably by preventing CDC42 activation, negatively regulates CD4(+) T-cell migration. The protein is Leucine-rich repeat and calponin homology domain-containing protein 1 of Felis catus (Cat).